A 254-amino-acid polypeptide reads, in one-letter code: MQNAGIAFDSLEQLNAARQLACRLGLPLLTPPLNLGRPTITLVLSAQRLELHHPELGAPLFVDFVKGAMGYRRRQGEGRKQPLARAIGLKGNVCPDVLDATAGLGRDAFVLAMLGCPVRLIEQSPVIGALLEDGLARARKTPETAPIIAQMTLMQANAVDWMGTLNAQDFPDVVYLDPMYPERTKSALVKKEMRLLRILAGKDENAPLLLEVALECARQRVVVKRPRPGVFLAGVKPDFSIESKTTRFDIYLTH.

S-adenosyl-L-methionine-binding positions include 106 to 107 (RD) and Asp-177.

The protein belongs to the methyltransferase superfamily. RsmJ family.

Its subcellular location is the cytoplasm. It catalyses the reaction guanosine(1516) in 16S rRNA + S-adenosyl-L-methionine = N(2)-methylguanosine(1516) in 16S rRNA + S-adenosyl-L-homocysteine + H(+). Its function is as follows. Specifically methylates the guanosine in position 1516 of 16S rRNA. The chain is Ribosomal RNA small subunit methyltransferase J from Nitrosococcus oceani (strain ATCC 19707 / BCRC 17464 / JCM 30415 / NCIMB 11848 / C-107).